Reading from the N-terminus, the 1040-residue chain is MSDSVLSNPTRQHATLREILARRDWENPACTNYQRLPAHPPFNSWRNVAAAHQDEPSQRLRRLNGEWKFSYFTRPEAVPESWLQQDLPDSATIPVPSNWQLQGYDTPIYTNVKYPIPVNPPYVPEDNPTGCYSLTFKVNHDWLSCGQTRVIFDGVNSAFYLWCNGHWVGYSQDSRLPAEFDISRYLTTGENRLAVMVLRWSDGSYLEDQDMWRMSGIFRDVTLLHKPTVHLGDIQLTTPLSADFRHGTLDIQVKATLSESEAKNYRVHAQLWRGNNLIGETRQAFGSDIVDERGTYHDRASLRLDVTRPDLWSAELPHLYRAVIALETAEGELLEAEAYDVGFRKVEISNGLLLLNGKPLLIRGVNRHEHHPQNGQVMDEETMRRDIMLMKQHNFNAVRCSHYPNHPLWYRLCDRYGLYVVDEANIETHGMQPMNRLSDDPMWLPAYSERVSRMVQRDRNHPCIIIWSLGNESGYGANHDALYQWIKRHDPTRPVHYEGGGANSRATDIVCPMYARVDEDQPFPNVPKWSISKWISMPNEHRPLILCEYAHAMGNSLGGFARYWKAFRQYPRLQGGFIWDWVDQALIRHDEQGNAYWAYGGDFGDMPNDRQFCLDGLLFPDRTPHPSLYEAQRAQQHIQFVWQAESPCELRVTSEYLFRHTDNEQLNWHITLDDKTLVEGSLPLKLAPQATQTLTLLESLPTVDRAGEIWLNVEVVQPKETAWSKANHRCAWDQWQLPIPLHLPEASCSKQKIPPVLRASDIYFDVVQGEQHWRFNRQSGLLEQWWTADTPALLTPLQDQFVRAPLDNDIGISEVDRIDPHAWAERWKSAGLYQLQTQCVAIQADQLADAVHIVTEHVFRHAGQILLRSKKRWQIDAYGVMTVDVDVDVATVLPSLARVGLSCQLADVAPQVSWIGLGPHENYPDRQLAAQHGHWNLPLDDLHTPYIFPSENGLRCNTRALTYGKWAITGNFHFGLSRYGLTQLMTCTHHHLLEKEKGVWLNLDGFHMGIGGDDSWSPSVHCDDLLTATHYHYRVAIQRH.

2 residues coordinate substrate: N111 and D210. D210 lines the Na(+) pocket. Residues E427, H429, and E472 each contribute to the Mg(2+) site. Substrate is bound by residues E472 and 548 to 551; that span reads EYAH. Residue E472 is the Proton donor of the active site. The Nucleophile role is filled by E548. N608 contacts Mg(2+). The Na(+) site is built by F612 and D615. Residues D615 and W1016 each contribute to the substrate site.

Belongs to the glycosyl hydrolase 2 family. In terms of assembly, homotetramer. Mg(2+) is required as a cofactor. It depends on Na(+) as a cofactor.

It carries out the reaction Hydrolysis of terminal non-reducing beta-D-galactose residues in beta-D-galactosides.. This Pectobacterium atrosepticum (strain SCRI 1043 / ATCC BAA-672) (Erwinia carotovora subsp. atroseptica) protein is Beta-galactosidase.